The chain runs to 231 residues: MNMMTVKQQGVWAALLWPYLLTASIPLDCKEEQGSLSRCPSISQEKLLDRVIQHAELIYRVSEESCSMFEEMFVPFPLRLQRNQAGYACITKALPIPSSKSEIQQISDTWLLHSVLMLVQSWIEPLVYLQTTLDRYDNAPDMLLNKTKWVSDKLISLEQGVVVLIRKMLDEGMLTATYNEQGLFQYDAQPDMLESVMRDYTLLSCFKKDAHKMEIFLKLLKCRQTDKYNCA.

The N-terminal stretch at 1 to 24 (MNMMTVKQQGVWAALLWPYLLTAS) is a signal peptide. 3 cysteine pairs are disulfide-bonded: cysteine 29-cysteine 39, cysteine 89-cysteine 205, and cysteine 222-cysteine 230. A glycan (N-linked (GlcNAc...) asparagine) is linked at asparagine 145.

It belongs to the somatotropin/prolactin family. Pituitary gland.

The protein resides in the secreted. The protein is Somatolactin of Paralichthys olivaceus (Bastard halibut).